A 49-amino-acid chain; its full sequence is MASFEEAEERILDKMICMRCNARNPKRADSCRKCGYKKLRPKAKERRAA.

It belongs to the eukaryotic ribosomal protein eL40 family.

The polypeptide is Large ribosomal subunit protein eL40 (Natronomonas pharaonis (strain ATCC 35678 / DSM 2160 / CIP 103997 / JCM 8858 / NBRC 14720 / NCIMB 2260 / Gabara) (Halobacterium pharaonis)).